The chain runs to 527 residues: BTB/POZ domain-containing protein At4g01160 (527 aa).

In terms of domain architecture, BTB spans 111–180 (NNNTSVLSVQ…MYSNSLSVTA (70 aa)). Residues 233–327 (VKPLTNAARQ…HMTTDRLKKI (95 aa)) enclose the BACK domain.

Its pathway is protein modification; protein ubiquitination. In terms of biological role, may act as a substrate-specific adapter of an E3 ubiquitin-protein ligase complex (CUL3-RBX1-BTB) which mediates the ubiquitination and subsequent proteasomal degradation of target proteins. This is BTB/POZ domain-containing protein At4g01160 from Arabidopsis thaliana (Mouse-ear cress).